Consider the following 464-residue polypeptide: UDP-N-acetylmuramate--L-alanine ligase (464 aa).

Position 112–118 (112–118) interacts with ATP; it reads GTHGKTT.

This sequence belongs to the MurCDEF family.

Its subcellular location is the cytoplasm. The enzyme catalyses UDP-N-acetyl-alpha-D-muramate + L-alanine + ATP = UDP-N-acetyl-alpha-D-muramoyl-L-alanine + ADP + phosphate + H(+). Its pathway is cell wall biogenesis; peptidoglycan biosynthesis. Cell wall formation. This chain is UDP-N-acetylmuramate--L-alanine ligase, found in Acidithiobacillus ferrooxidans (strain ATCC 23270 / DSM 14882 / CIP 104768 / NCIMB 8455) (Ferrobacillus ferrooxidans (strain ATCC 23270)).